The following is a 226-amino-acid chain: ATP synthase F(0) complex subunit a (226 aa).

M1 is modified (N-formylmethionine). 6 helical membrane passes run 9 to 29, 68 to 88, 97 to 117, 138 to 158, 164 to 184, and 189 to 209; these read FITP…FPSL, WTLM…LGLL, QLSM…ITGF, IPML…ALAV, ITAG…LMSI, and ALIT…VAMI.

This sequence belongs to the ATPase A chain family. As to quaternary structure, component of the ATP synthase complex composed at least of ATP5F1A/subunit alpha, ATP5F1B/subunit beta, ATP5MC1/subunit c (homooctomer), MT-ATP6/subunit a, MT-ATP8/subunit 8, ATP5ME/subunit e, ATP5MF/subunit f, ATP5MG/subunit g, ATP5MK/subunit k, ATP5MJ/subunit j, ATP5F1C/subunit gamma, ATP5F1D/subunit delta, ATP5F1E/subunit epsilon, ATP5PF/subunit F6, ATP5PB/subunit b, ATP5PD/subunit d, ATP5PO/subunit OSCP. ATP synthase complex consists of a soluble F(1) head domain (subunits alpha(3) and beta(3)) - the catalytic core - and a membrane F(0) domain - the membrane proton channel (subunits c, a, 8, e, f, g, k and j). These two domains are linked by a central stalk (subunits gamma, delta, and epsilon) rotating inside the F1 region and a stationary peripheral stalk (subunits F6, b, d, and OSCP). Interacts with DNAJC30; interaction is direct.

The protein resides in the mitochondrion inner membrane. The catalysed reaction is H(+)(in) = H(+)(out). Functionally, subunit a, of the mitochondrial membrane ATP synthase complex (F(1)F(0) ATP synthase or Complex V) that produces ATP from ADP in the presence of a proton gradient across the membrane which is generated by electron transport complexes of the respiratory chain. ATP synthase complex consist of a soluble F(1) head domain - the catalytic core - and a membrane F(1) domain - the membrane proton channel. These two domains are linked by a central stalk rotating inside the F(1) region and a stationary peripheral stalk. During catalysis, ATP synthesis in the catalytic domain of F(1) is coupled via a rotary mechanism of the central stalk subunits to proton translocation. With the subunit c (ATP5MC1), forms the proton-conducting channel in the F(0) domain, that contains two crucial half-channels (inlet and outlet) that facilitate proton movement from the mitochondrial intermembrane space (IMS) into the matrix. Protons are taken up via the inlet half-channel and released through the outlet half-channel, following a Grotthuss mechanism. The protein is ATP synthase F(0) complex subunit a of Bos taurus (Bovine).